Reading from the N-terminus, the 341-residue chain is Paired box protein Pax-9 (341 aa).

A DNA-binding region (paired) is located at residues 4-130 (AFGEVNQLGG…SSISRILRNK (127 aa)). Residues 7-63 (EVNQLGGVFVNGRPLPNAIRLRIVELAQLGIRPCDISRQLRVSHGCVSKILARYNET) form a PAI subdomain region. Residues 82-130 (TVVKHIRTYKQRDPGIFAWEIRDRLLADGVCDKYNVPSVSSISRILRNK) are RED subdomain. The interaction with KDM5B stretch occupies residues 168–189 (AAAAKVPTPPGVPAIPGSVAMP).

In terms of assembly, interacts with KDM5B.

The protein localises to the nucleus. Functionally, transcription factor required for normal development of thymus, parathyroid glands, ultimobranchial bodies, teeth, skeletal elements of skull and larynx as well as distal limbs. This Callimico goeldii (Goeldi's marmoset) protein is Paired box protein Pax-9 (PAX9).